The following is a 66-amino-acid chain: Conotoxin Lt5.6 (66 aa).

A signal peptide spans Met-1–Pro-19. A propeptide spanning residues Lys-20–Ala-54 is cleaved from the precursor.

Belongs to the conotoxin T superfamily. Contains 2 disulfide bonds that can be either 'C1-C3, C2-C4' or 'C1-C4, C2-C3', since these disulfide connectivities have been observed for conotoxins with cysteine framework V (for examples, see AC P0DQQ7 and AC P81755). Expressed by the venom duct.

It localises to the secreted. This Conus litteratus (Lettered cone) protein is Conotoxin Lt5.6.